Consider the following 128-residue polypeptide: UPF0325 protein YaeH (128 aa).

Belongs to the UPF0325 family.

The protein is UPF0325 protein YaeH of Escherichia coli (strain ATCC 8739 / DSM 1576 / NBRC 3972 / NCIMB 8545 / WDCM 00012 / Crooks).